A 627-amino-acid chain; its full sequence is tRNA uridine 5-carboxymethylaminomethyl modification enzyme MnmG (627 aa).

FAD is bound by residues 16–21, valine 128, and serine 183; that span reads GAGHAG. 275-289 serves as a coordination point for NAD(+); the sequence is GPRYCPSIEDKVMRF. Residue glutamine 372 coordinates FAD.

This sequence belongs to the MnmG family. In terms of assembly, homodimer. Heterotetramer of two MnmE and two MnmG subunits. The cofactor is FAD.

Its subcellular location is the cytoplasm. Functionally, NAD-binding protein involved in the addition of a carboxymethylaminomethyl (cmnm) group at the wobble position (U34) of certain tRNAs, forming tRNA-cmnm(5)s(2)U34. The polypeptide is tRNA uridine 5-carboxymethylaminomethyl modification enzyme MnmG (Geobacter sulfurreducens (strain ATCC 51573 / DSM 12127 / PCA)).